The sequence spans 386 residues: Protein phosphatase methylesterase 1 (386 aa).

Residues 20–48 form a disordered region; the sequence is ILEKLKGGQEPNSNEEGSDSIGDLPSLKN. Catalysis depends on residues Ser194, Asp222, and His348.

Belongs to the AB hydrolase superfamily.

The enzyme catalyses [phosphatase 2A protein]-C-terminal L-leucine methyl ester + H2O = [phosphatase 2A protein]-C-terminal L-leucine + methanol + H(+). Demethylates proteins that have been reversibly carboxymethylated. Demethylates the phosphatase PP2A catalytic subunit. The polypeptide is Protein phosphatase methylesterase 1 (PPE1) (Candida glabrata (strain ATCC 2001 / BCRC 20586 / JCM 3761 / NBRC 0622 / NRRL Y-65 / CBS 138) (Yeast)).